The following is a 303-amino-acid chain: Sulfotransferase 6B1 (303 aa).

Residue 65 to 70 (KCGSNW) participates in 3'-phosphoadenylyl sulfate binding. The active-site Proton acceptor is the His-118. 3'-phosphoadenylyl sulfate is bound by residues Arg-140, Ser-148, Tyr-203, 237–242 (STFQAM), and 259–261 (RKG).

The protein belongs to the sulfotransferase 1 family.

It is found in the cytoplasm. The protein resides in the cytosol. It catalyses the reaction thyroxine + 3'-phosphoadenylyl sulfate = thyroxine sulfate + adenosine 3',5'-bisphosphate + H(+). Functionally, sulfotransferase that utilizes 3'-phospho-5'-adenylyl sulfate (PAPS) as sulfonate donor to catalyze the sulfate conjugation of thyroxine. Involved in the metabolism of thyroxine. This Pan troglodytes (Chimpanzee) protein is Sulfotransferase 6B1 (SULT6B1).